The primary structure comprises 566 residues: Phenylalanine--tRNA ligase beta subunit (566 aa).

Positions 287–362 (YFQEEVEFDV…IGEGLASFYP (76 aa)) constitute a B5 domain. Mg(2+) contacts are provided by D340, D346, E349, and D350.

It belongs to the phenylalanyl-tRNA synthetase beta subunit family. Type 2 subfamily. Tetramer of two alpha and two beta subunits. Mg(2+) is required as a cofactor.

The protein localises to the cytoplasm. The enzyme catalyses tRNA(Phe) + L-phenylalanine + ATP = L-phenylalanyl-tRNA(Phe) + AMP + diphosphate + H(+). The protein is Phenylalanine--tRNA ligase beta subunit of Borrelia garinii subsp. bavariensis (strain ATCC BAA-2496 / DSM 23469 / PBi) (Borreliella bavariensis).